A 508-amino-acid polypeptide reads, in one-letter code: Protein ultraspiracle (508 aa).

Residues 1-103 form a modulating region; that stretch reads MDNCDQDASF…NHPLSGSKHL (103 aa). 2 disordered regions span residues 21–40 and 55–92; these read PDIS…KAES and PGSN…QQYP. The segment covering 24 to 35 has biased composition (polar residues); it reads SQLNDSNNSSFS. S35 is modified (phosphoserine). A compositionally biased stretch (low complexity) spans 57–90; that stretch reads SNSASSNNNSAGDAQMAQAPNSAGGSAAAAVQQQ. 2 consecutive NR C4-type zinc fingers follow at residues 104–124 and 140–164; these read CSIC…CEGC and CREN…YQKC. The nuclear receptor DNA-binding region spans 104–169; that stretch reads CSICGDRASG…RYQKCLTCGM (66 aa). Positions 170–223 are hinge; it reads KREAVQEERQRGARNAAGRLSASGGGSSGPGSVGGSSSQGGGGGGGVSGGMGSG. Positions 178-228 are disordered; that stretch reads RQRGARNAAGRLSASGGGSSGPGSVGGSSSQGGGGGGGVSGGMGSGNGSDD. Over residues 192–224 the composition is skewed to gly residues; the sequence is SGGGSSGPGSVGGSSSQGGGGGGGVSGGMGSGN. The NR LBD domain occupies 239–498; sequence SIERIIEAEQ…ELFLEQLEAP (260 aa).

It belongs to the nuclear hormone receptor family. NR2 subfamily. In terms of assembly, heterodimer of USP and ECR. Only the heterodimer is capable of high-affinity binding to ecdysone.

The protein resides in the nucleus. Functionally, receptor for ecdysone. May be an important modulator of insect metamorphosis. Plays an important part in embryonic and post-embryonic development. Binds to ecdysone response elements (ECRES) such as in the promoter region of s15 chorion gene. The polypeptide is Protein ultraspiracle (usp) (Drosophila melanogaster (Fruit fly)).